A 475-amino-acid chain; its full sequence is FAD-dependent monooxygenase janM (475 aa).

The helical transmembrane segment at 8-24 (VIIVGGSIGGLTLAHCL) threads the bilayer. Glu-35, Gly-49, and Arg-108 together coordinate FAD. A glycan (N-linked (GlcNAc...) asparagine) is linked at Asn-147. Asp-299 and Ala-312 together coordinate FAD. Residues 432–451 (GWRFHAMLCILMLAILYTWV) traverse the membrane as a helical segment.

Belongs to the paxM FAD-dependent monooxygenase family. FAD serves as cofactor.

It is found in the membrane. It functions in the pathway secondary metabolite biosynthesis. In terms of biological role, FAD-dependent monooxygenase; part of the gene cluster that mediates the biosynthesis of the indole diterpenes janthitremanes such as shearinine K or shearinine A. The geranylgeranyl diphosphate (GGPP) synthase janG catalyzes the first step in janthitremane biosynthesis via conversion of farnesyl pyrophosphate and isopentyl pyrophosphate into geranylgeranyl pyrophosphate (GGPP). Condensation of indole-3-glycerol phosphate with GGPP by the prenyl transferase janC then forms 3-geranylgeranylindole (3-GGI). Epoxidation by the FAD-dependent monooxygenase janM leads to a epoxidized-GGI that is substrate of the terpene cyclase janB for cyclization to yield paspaline. Paspaline is subsequently converted to 13-desoxypaspaline by the cytochrome P450 monooxygenase janP, via beta-PC-M6 in a series of alpha-face oxidations. The cytochrome P450 monooxygenase janQ is proposed to carry out sequential beta-face oxidation steps at C-7 and C-13 of 13-desoxypaspaline to form paspalicine and paspalinine respectively. The indole diterpene prenyltransferase janD may then convert paspalinine into shearinine K which is substrate of janO and/or additional enzymes for oxidation and cyclization to generate shearinine A. The polypeptide is FAD-dependent monooxygenase janM (Penicillium janthinellum (Penicillium vitale)).